Here is a 425-residue protein sequence, read N- to C-terminus: E3 ubiquitin-protein ligase CBLL2 (425 aa).

An RING-type zinc finger spans residues 57–97 (CDKCDLPIKIYGRIIPCKHAFCYHCANLYDKVGYKVCPRCR). Residues 96-154 (CRYPVLRIEAHKRGSVFMCSIVQQCKRTYLSQKSLQAHIKRRHKRARKQVTSASLEKVR) form an HYB domain region. A C2H2-type zinc finger spans residues 112–138 (FMCSIVQQCKRTYLSQKSLQAHIKRRH). 2 disordered regions span residues 241–297 (DHIQ…HQMP) and 382–425 (TDAM…HRRY). The segment covering 398–408 (PCPPTRSPPPS) has biased composition (pro residues). Basic residues predominate over residues 412-425 (GRSHHSHQRRHRRY).

As to quaternary structure, homodimer. Exclusively expressed in testis and sperm, including spermatocytes, round and elongated spermatids, and Leydig cells.

Its subcellular location is the cytoplasm. It catalyses the reaction S-ubiquitinyl-[E2 ubiquitin-conjugating enzyme]-L-cysteine + [acceptor protein]-L-lysine = [E2 ubiquitin-conjugating enzyme]-L-cysteine + N(6)-ubiquitinyl-[acceptor protein]-L-lysine.. The protein operates within protein modification; protein ubiquitination. Its function is as follows. E3 ubiquitin ligase catalyzing the covalent attachment of ubiquitin moieties onto substrate proteins. May operate on tyrosine-phosphorylated SRC substrates. This Homo sapiens (Human) protein is E3 ubiquitin-protein ligase CBLL2.